We begin with the raw amino-acid sequence, 507 residues long: MGSSFETIDIATSARRIGVDNRISLKFYFRIADNILKQANIFRAEKNVIDLYVMLLRFSSLALETIPSHRDYRTSLKSNKEYLRMRLLDVLTELEKLKPVVQQRIDELYPKLKPRYNVQAHPANGSLGWSSAVKPSFNSYDHAKVRNPPGHNSGYMGSRGQQFLNAAPLEERFRKMSVNFRPNEETLSKHSILGPGGLSAQWQPPKYDTKVQYPSNIDFSPVVIPSFQQLVDSKPMITNGSNDEPEKPIVEPSVASNEKIQKNYTEELSSMISFEEPESVNENNLIRQPSPPPVLAEVQDLVPALCPEVREPECMIENSLPDESLRSESPLELHIATSMMDTFMRLAKSNTKKNLETCGILAGSLKNRKFYITALIIPKQESTSDSCQATNEEEIFEVQDKQSLFPLGWIHTHPTQSCFMSSIDVHTHYSYQIMLPEAVAIVMAPQDSSRNHGIFRLTTPGGMTVIRNCDRRGFHAHSSPEDGGPIYNTCKEVYMNPNLKFDVIDLR.

In terms of domain architecture, MPN spans 333 to 463 (LHIATSMMDT…IFRLTTPGGM (131 aa)). 7 residues coordinate Zn(2+): histidine 411, histidine 413, aspartate 424, histidine 426, cysteine 469, histidine 475, and histidine 477. The JAMM motif motif lies at 411–424 (HTHPTQSCFMSSID).

Belongs to the peptidase M67C family. Requires Zn(2+) as cofactor.

The protein resides in the membrane. It is found in the cytoplasm. Its function is as follows. Zinc metalloprotease that cleaves 'Lys-48'- and 'Lys-63'-linked polyubiquitin chains. The polypeptide is AMSH-like ubiquitin thioesterase 1 (AMSH1) (Arabidopsis thaliana (Mouse-ear cress)).